We begin with the raw amino-acid sequence, 588 residues long: Aspartate--tRNA ligase (588 aa).

E172 provides a ligand contact to L-aspartate. The interval 196–199 is aspartate; the sequence is QLFK. R218 contacts L-aspartate. Residues 218–220 and Q227 each bind ATP; that span reads RDE. Residue H449 participates in L-aspartate binding. E483 is a binding site for ATP. R490 contacts L-aspartate. 535-538 contacts ATP; that stretch reads GLDR.

Belongs to the class-II aminoacyl-tRNA synthetase family. Type 1 subfamily. As to quaternary structure, homodimer.

The protein resides in the cytoplasm. The catalysed reaction is tRNA(Asp) + L-aspartate + ATP = L-aspartyl-tRNA(Asp) + AMP + diphosphate. Catalyzes the attachment of L-aspartate to tRNA(Asp) in a two-step reaction: L-aspartate is first activated by ATP to form Asp-AMP and then transferred to the acceptor end of tRNA(Asp). The polypeptide is Aspartate--tRNA ligase (Histophilus somni (strain 2336) (Haemophilus somnus)).